Reading from the N-terminus, the 162-residue chain is SsrA-binding protein (162 aa).

The protein belongs to the SmpB family.

It is found in the cytoplasm. Required for rescue of stalled ribosomes mediated by trans-translation. Binds to transfer-messenger RNA (tmRNA), required for stable association of tmRNA with ribosomes. tmRNA and SmpB together mimic tRNA shape, replacing the anticodon stem-loop with SmpB. tmRNA is encoded by the ssrA gene; the 2 termini fold to resemble tRNA(Ala) and it encodes a 'tag peptide', a short internal open reading frame. During trans-translation Ala-aminoacylated tmRNA acts like a tRNA, entering the A-site of stalled ribosomes, displacing the stalled mRNA. The ribosome then switches to translate the ORF on the tmRNA; the nascent peptide is terminated with the 'tag peptide' encoded by the tmRNA and targeted for degradation. The ribosome is freed to recommence translation, which seems to be the essential function of trans-translation. In Colwellia psychrerythraea (strain 34H / ATCC BAA-681) (Vibrio psychroerythus), this protein is SsrA-binding protein.